Reading from the N-terminus, the 489-residue chain is Homoserine O-acetyltransferase (489 aa).

Residues 63–435 (NALVICHALS…SPEGHDAFLL (373 aa)) form the AB hydrolase-1 domain. The active site involves Ser-162. Ser-162 (nucleophile) is an active-site residue. Positions 247 to 272 (RFGRNVPDPSKRQNINGTERLPTPPN) are disordered. Active-site residues include Asp-401 and His-430.

The protein belongs to the AB hydrolase superfamily. MetX family.

It carries out the reaction L-homoserine + acetyl-CoA = O-acetyl-L-homoserine + CoA. Its pathway is amino-acid biosynthesis; L-methionine biosynthesis via de novo pathway; O-acetyl-L-homoserine from L-homoserine: step 1/1. Its function is as follows. Commits homoserine to the methionine biosynthesis pathway by catalyzing its O-acetylation. The sequence is that of Homoserine O-acetyltransferase (metE) from Emericella nidulans (strain FGSC A4 / ATCC 38163 / CBS 112.46 / NRRL 194 / M139) (Aspergillus nidulans).